The chain runs to 273 residues: MSSHRPQHRLSVPDIQRRKGAGSLVALTAYSTPMARLLDPHADLLLVGDSLGMVLYGMPSTLGVSLEMMVAHTLAVMRGSRRACVVADLPFASYQESPRQAFRNAARLLADSGAQAVKLEGGEEMEETVDFLVRRGIPVLAHIGLMPQQVNAMGGFKAQGRDPESAERVRRDGLAMQRGGAFAVVIEGVGEPLARRLSEELAIPCIGIGASPACDGQVLVSEDLLGLSGEQVPRFVERYARLDREIDEAARRFAEDVRERRFPEARHCFAMRE.

Positions 49 and 88 each coordinate Mg(2+). Residues 49–50, Asp88, and Lys118 contribute to the 3-methyl-2-oxobutanoate site; that span reads DS. Glu120 contacts Mg(2+). Glu187 (proton acceptor) is an active-site residue.

It belongs to the PanB family. Homodecamer; pentamer of dimers. Mg(2+) serves as cofactor.

It localises to the cytoplasm. It carries out the reaction 3-methyl-2-oxobutanoate + (6R)-5,10-methylene-5,6,7,8-tetrahydrofolate + H2O = 2-dehydropantoate + (6S)-5,6,7,8-tetrahydrofolate. The protein operates within cofactor biosynthesis; (R)-pantothenate biosynthesis; (R)-pantoate from 3-methyl-2-oxobutanoate: step 1/2. Its function is as follows. Catalyzes the reversible reaction in which hydroxymethyl group from 5,10-methylenetetrahydrofolate is transferred onto alpha-ketoisovalerate to form ketopantoate. In Pseudomonas aeruginosa (strain UCBPP-PA14), this protein is 3-methyl-2-oxobutanoate hydroxymethyltransferase 1.